A 111-amino-acid polypeptide reads, in one-letter code: UPF0145 protein BMA10229_A0446 (111 aa).

Belongs to the UPF0145 family.

This chain is UPF0145 protein BMA10229_A0446, found in Burkholderia mallei (strain NCTC 10229).